The chain runs to 224 residues: Protein YiiM (224 aa).

The MOSC domain occupies 26–163; it reads IQVDGELMLT…VSADAPLELV (138 aa).

In terms of assembly, monomer.

This Escherichia coli (strain K12) protein is Protein YiiM (yiiM).